We begin with the raw amino-acid sequence, 183 residues long: Ribosome rescue factor SmrB (183 aa).

The 76-residue stretch at 98–173 (LDLHGLTQLQ…GDAALLVLIE (76 aa)) folds into the Smr domain.

Belongs to the SmrB family. As to quaternary structure, associates with collided ribosomes, but not with correctly translating polysomes.

Acts as a ribosome collision sensor. Detects stalled/collided disomes (pairs of ribosomes where the leading ribosome is stalled and a second ribosome has collided with it) and endonucleolytically cleaves mRNA at the 5' boundary of the stalled ribosome. Stalled/collided disomes form a new interface (primarily via the 30S subunits) that binds SmrB. Cleaved mRNA becomes available for tmRNA ligation, leading to ribosomal subunit dissociation and rescue of stalled ribosomes. This chain is Ribosome rescue factor SmrB, found in Escherichia coli O17:K52:H18 (strain UMN026 / ExPEC).